Consider the following 41-residue polypeptide: Cytochrome b559 subunit beta (41 aa).

A helical membrane pass occupies residues 16-32; the sequence is WLAVHALAIPTVFFLGS. His20 serves as a coordination point for heme.

The protein belongs to the PsbE/PsbF family. As to quaternary structure, heterodimer of an alpha subunit and a beta subunit. PSII is composed of 1 copy each of membrane proteins PsbA, PsbB, PsbC, PsbD, PsbE, PsbF, PsbH, PsbI, PsbJ, PsbK, PsbL, PsbM, PsbT, PsbY, PsbZ, Psb30/Ycf12, at least 3 peripheral proteins of the oxygen-evolving complex and a large number of cofactors. It forms dimeric complexes. The cofactor is heme b.

It is found in the plastid. Its subcellular location is the chloroplast thylakoid membrane. In terms of biological role, this b-type cytochrome is tightly associated with the reaction center of photosystem II (PSII). PSII is a light-driven water:plastoquinone oxidoreductase that uses light energy to abstract electrons from H(2)O, generating O(2) and a proton gradient subsequently used for ATP formation. It consists of a core antenna complex that captures photons, and an electron transfer chain that converts photonic excitation into a charge separation. The protein is Cytochrome b559 subunit beta of Euglena gracilis.